Here is a 360-residue protein sequence, read N- to C-terminus: MLLLLAEYLQQFHKGFAVFQYLTLRGILGVLTALCLSLFLGPWMIRTLQNLQIGQSVRNDGPQSHLSKSGTPTMGGALILSSIGISTLLWADLHNRYVWVVLLVTLLFGAIGWVDDYRKVIEKNSKGLPSRWKYFWQSVFGVGAAIFLYTTAPSAVETTLIIPMLKDASIPLGIGFVVLTYFVIVGSSNAVNLTDGLDGLAIMPTVMVGGALGIFCYLSGNVKFAEYLLIPYVPGAGELIVFCGALIGAGLGFLWFNTYPAQVFMGDVGALALGAALGTIAVIVRQEIVLFIMGGVFVMETLSVVIQVASFKLTGRRVFRMAPIHHHFELKGWPEPRVIVRFWIITVILVLVGLATLKLR.

10 helical membrane passes run 25-45 (RGIL…PWMI), 73-93 (TMGG…WADL), 97-117 (YVWV…VDDY), 142-162 (VGAA…TLII), 168-188 (ASIP…VGSS), 199-219 (GLAI…CYLS), 236-256 (AGEL…FLWF), 263-283 (VFMG…IAVI), 288-308 (IVLF…VIQV), and 338-358 (VIVR…ATLK).

The protein belongs to the glycosyltransferase 4 family. MraY subfamily. The cofactor is Mg(2+).

Its subcellular location is the cell inner membrane. It carries out the reaction UDP-N-acetyl-alpha-D-muramoyl-L-alanyl-gamma-D-glutamyl-meso-2,6-diaminopimeloyl-D-alanyl-D-alanine + di-trans,octa-cis-undecaprenyl phosphate = di-trans,octa-cis-undecaprenyl diphospho-N-acetyl-alpha-D-muramoyl-L-alanyl-D-glutamyl-meso-2,6-diaminopimeloyl-D-alanyl-D-alanine + UMP. It functions in the pathway cell wall biogenesis; peptidoglycan biosynthesis. In terms of biological role, catalyzes the initial step of the lipid cycle reactions in the biosynthesis of the cell wall peptidoglycan: transfers peptidoglycan precursor phospho-MurNAc-pentapeptide from UDP-MurNAc-pentapeptide onto the lipid carrier undecaprenyl phosphate, yielding undecaprenyl-pyrophosphoryl-MurNAc-pentapeptide, known as lipid I. This Pseudomonas fluorescens (strain SBW25) protein is Phospho-N-acetylmuramoyl-pentapeptide-transferase.